Here is a 650-residue protein sequence, read N- to C-terminus: MLLTKREKHLLAAFQNYGKLSLKQMIDLLKVSQRTVYRTISDLTDSLNTINISIIKENQNYFLVGELANLASIISLDTYEQYERLNLITYKLLMSFSSITNEQLQEEFNVSNVTIIQDIAEIEKRLADFDLRLDRKKGYRLVGNKNTLRRLLAILLTNNLSISDFGAGAYGHFEVLDKAKLELAKQIFQSSQEDLPDLDAKMSEFFIILLALSGWRDNEAVGHSISKAALDFSQKVYTEFSQKTNQFYSIQEILYYASILDELVIKRQETPLFHEKFDSAFFYNISNLIDKVSLYTKINFAKDKTLFHFLFNHIRLNLAVPQIFEDKSNNTIAHEVVQGNEYLHRVVSLLVQDIFPKYLQKEPEYELITLHFASSLRRSPDIYPIKILLLTDERPLARELLITRIKTIAPFVDKVVVKELAQYETKDKDYYNCVLATKPLVDKAVKMVSTYPDAKEMLQLQDYLQNVQAHQKIIIRDEQTNKQGYNLQNYFLATQQLLQEFSYQEIDNPADFETSVPKIMETIAAVSDKTYLSSKLLKCFAVSPLAIPETHLALLHTQSSKVITSCFKIYDLKRPVTALSMNYEKETVTRILVMLTRLDETKEMRDLMTAISQSIIENHLYTEIYKTGNKDIIYQLLNQIFTEKIKKLET.

In terms of domain architecture, PRD spans 276–382 (KFDSAFFYNI…ASSLRRSPDI (107 aa)). The PTS EIIA type-2 domain maps to 490–640 (YFLATQQLLQ…DIIYQLLNQI (151 aa)). Histidine 556 carries the post-translational modification Phosphohistidine; by HPr.

In terms of biological role, not necessary for mannitol utilization. May be involved in regulation of the mannitol phosphoenolpyruvate-dependent sugar phosphotransferase system (PTS). This Streptococcus mutans serotype c (strain ATCC 700610 / UA159) protein is Putative transcriptional regulator MtlR (mtlR).